Consider the following 632-residue polypeptide: Thioredoxin domain-containing protein C959.05c (632 aa).

An N-terminal signal peptide occupies residues 1 to 22 (MKLFLYHFTFIVYYFIISFSYA). Residues N35, N41, and N140 are each glycosylated (N-linked (GlcNAc...) asparagine). Residues 153–284 (SDSSSTDPAF…LLSYSNQVAS (132 aa)) enclose the Thioredoxin domain. C209 and C212 form a disulfide bridge. An N-linked (GlcNAc...) asparagine glycan is attached at N557. The chain crosses the membrane as a helical span at residues 583–603 (LIVFNLLIALLILSILTIISA).

The protein belongs to the protein disulfide isomerase family.

It is found in the endoplasmic reticulum membrane. It carries out the reaction Catalyzes the rearrangement of -S-S- bonds in proteins.. Functionally, acts as a membrane-bound chaperone in endoplasmic reticulum quality control. Probably facilitates presentation of substrate to membrane-bound components of the degradation machinery. In Schizosaccharomyces pombe (strain 972 / ATCC 24843) (Fission yeast), this protein is Thioredoxin domain-containing protein C959.05c.